We begin with the raw amino-acid sequence, 430 residues long: Serine/threonine-protein kinase Sgk1 (430 aa).

The interval 1–60 is necessary for localization to the mitochondria; it reads MTVKTEAARSTLTYSRMRGMVAILIAFMKQRRMGLNDFIQKLANNSYACKHPEVQSYLKI. The interval 66–92 is disordered; that stretch reads PELMNANPSPPPSPSQQINLGPSSNPH. Phosphoserine is present on serine 74. The residue at position 78 (serine 78) is a Phosphoserine; by MAPK7. Polar residues predominate over residues 81–91; the sequence is QQINLGPSSNP. A Protein kinase domain is found at 98-354; that stretch reads FHFLKVIGKG…FMEIKSHIFF (257 aa). ATP is bound by residues 104-112 and lysine 127; that span reads IGKGSFGKV. Positions 131–141 match the Nuclear localization signal motif; sequence KKAILKKKEEK. Aspartate 222 functions as the Proton acceptor in the catalytic mechanism. Phosphothreonine; by PDPK1 is present on threonine 256. Residues 355–430 form the AGC-kinase C-terminal domain; the sequence is SLINWDDLIN…SYAPPMDSFL (76 aa). Residue threonine 368 is modified to Phosphothreonine; by PKA. Serine 396, serine 400, and serine 421 each carry phosphoserine.

Belongs to the protein kinase superfamily. AGC Ser/Thr protein kinase family. In terms of assembly, homodimer; disulfide-linked. Forms a trimeric complex with FBXW7 and NOTCH1. Interacts with MAPK3/ERK1, MAPK1/ERK2, MAP2K1/MEK1, MAP2K2/MEK2, NEDD4, NEDD4L, MAPK7, CREB1, SLC9A3R2/NHERF2 and KCNJ1/ROMK1. Associates with the mammalian target of rapamycin complex 2 (mTORC2) via an interaction with MAPKAP1/SIN1. Interacts with MAPT/TAU. Regulated by phosphorylation. Activated by phosphorylation on Ser-421 by mTORC2, transforming it into a substrate for PDPK1 which phosphorylates it on Thr-256. Phosphorylation on Ser-396 and Ser-400 are also essential for its activity. Phosphorylation on Ser-78 by MAPK7 is required for growth factor-induced cell cycle progression. In terms of processing, ubiquitinated by NEDD4L; which promotes proteasomal degradation. Ubiquitinated by SYVN1 at the endoplasmic reticulum; which promotes rapid proteasomal degradation and maintains a high turnover rate in resting cells. As to expression, expressed in most tissues with highest levels in the ovary, thymus and lung. In the kidney, expressed within glomeruli of the cortex, at low levels in outer medulla and moderate levels in inner medulla and papilla.

It localises to the cytoplasm. It is found in the nucleus. The protein localises to the endoplasmic reticulum membrane. The protein resides in the cell membrane. Its subcellular location is the mitochondrion. It catalyses the reaction L-seryl-[protein] + ATP = O-phospho-L-seryl-[protein] + ADP + H(+). The catalysed reaction is L-threonyl-[protein] + ATP = O-phospho-L-threonyl-[protein] + ADP + H(+). With respect to regulation, two specific sites, one in the kinase domain (Thr-256) and the other in the C-terminal regulatory region (Ser-421), need to be phosphorylated for its full activation. Phosphorylation at Ser-396 and Ser-400 are also essential for its activity. Activated by WNK1, WNK2, WNK3 and WNK4. Functionally, serine/threonine-protein kinase which is involved in the regulation of a wide variety of ion channels, membrane transporters, cellular enzymes, transcription factors, neuronal excitability, cell growth, proliferation, survival, migration and apoptosis. Plays an important role in cellular stress response. Contributes to regulation of renal Na(+) retention, renal K(+) elimination, salt appetite, gastric acid secretion, intestinal Na(+)/H(+) exchange and nutrient transport, insulin-dependent salt sensitivity of blood pressure, salt sensitivity of peripheral glucose uptake, cardiac repolarization and memory consolidation. Up-regulates Na(+) channels: SCNN1A/ENAC, SCN5A and ASIC1/ACCN2, K(+) channels: KCNJ1/ROMK1, KCNA1-5, KCNQ1-5 and KCNE1, epithelial Ca(2+) channels: TRPV5 and TRPV6, chloride channels: BSND, CLCN2 and CFTR, glutamate transporters: SLC1A3/EAAT1, SLC1A2 /EAAT2, SLC1A1/EAAT3, SLC1A6/EAAT4 and SLC1A7/EAAT5, amino acid transporters: SLC1A5/ASCT2, SLC38A1/SN1 and SLC6A19, creatine transporter: SLC6A8, Na(+)/dicarboxylate cotransporter: SLC13A2/NADC1, Na(+)-dependent phosphate cotransporter: SLC34A2/NAPI-2B, glutamate receptor: GRIK2/GLUR6. Up-regulates carriers: SLC9A3/NHE3, SLC12A1/NKCC2, SLC12A3/NCC, SLC5A3/SMIT, SLC2A1/GLUT1, SLC5A1/SGLT1 and SLC15A2/PEPT2. Regulates enzymes: GSK3A/B, PMM2 and Na(+)/K(+) ATPase, and transcription factors: CTNNB1 and nuclear factor NF-kappa-B. Stimulates sodium transport into epithelial cells by enhancing the stability and expression of SCNN1A/ENAC. This is achieved by phosphorylating the NEDD4L ubiquitin E3 ligase, promoting its interaction with 14-3-3 proteins, thereby preventing it from binding to SCNN1A/ENAC and targeting it for degradation. Regulates store-operated Ca(+2) entry (SOCE) by stimulating ORAI1 and STIM1. Regulates KCNJ1/ROMK1 directly via its phosphorylation or indirectly via increased interaction with SLC9A3R2/NHERF2. Phosphorylates MDM2 and activates MDM2-dependent ubiquitination of p53/TP53. Phosphorylates SLC2A4/GLUT4 and up-regulates its activity. Phosphorylates APBB1/FE65 and promotes its localization to the nucleus. Phosphorylates FBXW7 and plays an inhibitory role in the NOTCH1 signaling. Phosphorylates FOXO1 resulting in its relocalization from the nucleus to the cytoplasm. Phosphorylates FOXO3, promoting its exit from the nucleus and interference with FOXO3-dependent transcription. Phosphorylates BRAF and MAP3K3/MEKK3 and inhibits their activity. Phosphorylates SLC9A3/NHE3 in response to dexamethasone, resulting in its activation and increased localization at the cell membrane. Phosphorylates CREB1. Necessary for vascular remodeling during angiogenesis. Phosphorylates MAPT/TAU and mediates microtubule depolymerization and neurite formation in hippocampal neurons. Phosphorylates MAPK1/ERK2 and activates it by enhancing its interaction with MAP2K1/MEK1 and MAP2K2/MEK2. May also play an important role in the development of particular groups of neurons in the postnatal brain. The polypeptide is Serine/threonine-protein kinase Sgk1 (Sgk1) (Rattus norvegicus (Rat)).